Reading from the N-terminus, the 331-residue chain is Lipoyl synthase (331 aa).

A disordered region spans residues 1-20; it reads MTTETNPAVTPAYNPSEKQK. The [4Fe-4S] cluster site is built by C71, C76, C82, C97, C101, C104, and S311. The Radical SAM core domain occupies 82-300; sequence CFGKGTATFM…EEEAYKMGFA (219 aa).

Belongs to the radical SAM superfamily. Lipoyl synthase family. It depends on [4Fe-4S] cluster as a cofactor.

It localises to the cytoplasm. It carries out the reaction [[Fe-S] cluster scaffold protein carrying a second [4Fe-4S](2+) cluster] + N(6)-octanoyl-L-lysyl-[protein] + 2 oxidized [2Fe-2S]-[ferredoxin] + 2 S-adenosyl-L-methionine + 4 H(+) = [[Fe-S] cluster scaffold protein] + N(6)-[(R)-dihydrolipoyl]-L-lysyl-[protein] + 4 Fe(3+) + 2 hydrogen sulfide + 2 5'-deoxyadenosine + 2 L-methionine + 2 reduced [2Fe-2S]-[ferredoxin]. The protein operates within protein modification; protein lipoylation via endogenous pathway; protein N(6)-(lipoyl)lysine from octanoyl-[acyl-carrier-protein]: step 2/2. Functionally, catalyzes the radical-mediated insertion of two sulfur atoms into the C-6 and C-8 positions of the octanoyl moiety bound to the lipoyl domains of lipoate-dependent enzymes, thereby converting the octanoylated domains into lipoylated derivatives. In Janthinobacterium sp. (strain Marseille) (Minibacterium massiliensis), this protein is Lipoyl synthase.